Reading from the N-terminus, the 357-residue chain is Iron deficiency-induced protein A (357 aa).

The tat-type signal signal peptide spans methionine 1–alanine 36. Fe cation contacts are provided by histidine 48, tyrosine 49, tyrosine 182, tyrosine 238, and tyrosine 239.

It belongs to the bacterial solute-binding protein 1 family. In terms of processing, predicted to be exported by the Tat system. The position of the signal peptide cleavage has not been experimentally proven.

It localises to the cellular thylakoid membrane. Plays an important role in protecting the acceptor side of photosystem II (PSII) against oxidative damage, especially under iron-limiting growth conditions. In terms of biological role, may also be part of a periplasmic ABC transporter complex involved in iron import. The polypeptide is Iron deficiency-induced protein A (idiA) (Synechococcus elongatus (strain ATCC 33912 / PCC 7942 / FACHB-805) (Anacystis nidulans R2)).